Consider the following 74-residue polypeptide: Translation initiation factor IF-1 (74 aa).

The region spanning 1–72 is the S1-like domain; sequence MGKEDVIRME…TRGRIVYRKK (72 aa).

Belongs to the IF-1 family. In terms of assembly, component of the 30S ribosomal translation pre-initiation complex which assembles on the 30S ribosome in the order IF-2 and IF-3, IF-1 and N-formylmethionyl-tRNA(fMet); mRNA recruitment can occur at any time during PIC assembly.

The protein resides in the cytoplasm. One of the essential components for the initiation of protein synthesis. Stabilizes the binding of IF-2 and IF-3 on the 30S subunit to which N-formylmethionyl-tRNA(fMet) subsequently binds. Helps modulate mRNA selection, yielding the 30S pre-initiation complex (PIC). Upon addition of the 50S ribosomal subunit IF-1, IF-2 and IF-3 are released leaving the mature 70S translation initiation complex. The sequence is that of Translation initiation factor IF-1 from Thermotoga petrophila (strain ATCC BAA-488 / DSM 13995 / JCM 10881 / RKU-1).